A 55-amino-acid chain; its full sequence is Large ribosomal subunit protein bL33 (55 aa).

The protein belongs to the bacterial ribosomal protein bL33 family.

The polypeptide is Large ribosomal subunit protein bL33 (Hamiltonella defensa subsp. Acyrthosiphon pisum (strain 5AT)).